The chain runs to 874 residues: MTISHIDPEYQANTIEPSVQQDWENRKVFKVADTVEGKHRYILSMFPYPSGKLHMGHVRNYTIGDVISRFYRLKGEAVLQPMGWDAFGLPAENAAIAHKVAPAKWTFENIAYMRDQLKKLGLSVDWDREFATCTPEYYHWEQWLFVQLYKKGLIYRKLSTVNWDPVDQTVLANEQVENGRGWRSGALVEKRDIPMYYFRITDYAQELLDDLDTLQDGWPQQVLTMQRNWIGRSTGMEITFPSANTEIYADGLTVYTTRADTLMGVTYVAVAAEHPLALKAAENNPELAAFIEECRMGSVAEADLATAEKKGMATGLFVKHPVTGEELPVWIANYVLMSYGSGAVMAVPAHDERDFEFANKFNLPIKQVIDAKGADDADYSATEWQEWYGSKEGKLVNSGEFDGLEFQAAFDAFLAKLEPQGLANSKVQFRLRDWGVSRQRYWGCPIPMINCDTCGQVTVPEDQLPVVLPTDVVPDGSGNPLNKMPEFYETKCPCCGGDARRETDTLDTFVESSWYYARYASPDFTGGMVKPEAAKNWLPVNQYIGGVEHAILHLLYARFFHKLMRDEGVVQGNEPFTNLLTQGMVLADTFYREAENGKKTWFNPADIELERDEKGRIISAKYSGDGQEVIIGGQEKMSKSKNNGIDPQAIIDQYGADTARVFMMFAAPPDQSLEWSDAGVEGANRFLKRVWRLVASFLEKGNSATAIDKANLSKDAQDLRRKTHETIQKVSDDIERRHAFNTAIAALMELLNASNKFEAKDDNDVAVEREAITTLLTLLAPFAPHLSQTLLAQFGTDLTEATFPEVDASALTRNTQTIVVQVNGKLRGKLEVSVDISKDELLAQAKALPEVQQFLTGPTKKEIVVPNKLVNLVV.

Positions 47–57 (PYPSGKLHMGH) match the 'HIGH' region motif. The 'KMSKS' region signature appears at 636–640 (KMSKS). Position 639 (Lys639) interacts with ATP.

It belongs to the class-I aminoacyl-tRNA synthetase family.

It is found in the cytoplasm. The catalysed reaction is tRNA(Leu) + L-leucine + ATP = L-leucyl-tRNA(Leu) + AMP + diphosphate. This chain is Leucine--tRNA ligase, found in Acinetobacter baumannii (strain AB307-0294).